A 39-amino-acid polypeptide reads, in one-letter code: Conotoxin Cl14.7 (39 aa).

A propeptide spanning residues 1-15 is cleaved from the precursor; it reads MGDLSEADSMKHQLQ.

In terms of processing, contains 2 disulfide bonds. In terms of tissue distribution, expressed by the venom duct.

Its subcellular location is the secreted. This is Conotoxin Cl14.7 from Californiconus californicus (California cone).